Consider the following 567-residue polypeptide: Methionine--tRNA ligase (567 aa).

The short motif at Pro-11–Asn-21 is the 'HIGH' region element. Cys-143, Cys-146, Cys-156, and Cys-159 together coordinate Zn(2+). The short motif at Lys-331–Ser-335 is the 'KMSKS' region element. Lys-334 serves as a coordination point for ATP.

The protein belongs to the class-I aminoacyl-tRNA synthetase family. MetG type 1 subfamily. Zn(2+) serves as cofactor.

The protein resides in the cytoplasm. The enzyme catalyses tRNA(Met) + L-methionine + ATP = L-methionyl-tRNA(Met) + AMP + diphosphate. Is required not only for elongation of protein synthesis but also for the initiation of all mRNA translation through initiator tRNA(fMet) aminoacylation. The chain is Methionine--tRNA ligase from Pyrobaculum islandicum (strain DSM 4184 / JCM 9189 / GEO3).